Here is a 193-residue protein sequence, read N- to C-terminus: MATPASAPDTRALVADFVGYKLRQKGYVCGAGPGEGPAADPLHQAMRAAGDEFETRFRRTFSDLAAQLHVTPGSAQQRFTQVSDELFQGGPNWGRLVAFFVFGAALCAESVNKEMEPLVGQVQEWMVAYLETRLADWIHSSGGWAEFTALYGDGALEEARRLREGNWASVRTVLTGAVALGALVTVGAFFASK.

Ala2 is modified (N-acetylalanine). The BH4 signature appears at 9 to 29 (DTRALVADFVGYKLRQKGYVC). A BH1 motif is present at residues 85-104 (ELFQGGPNWGRLVAFFVFGA). Positions 136–151 (DWIHSSGGWAEFTALY) match the BH2 motif.

It belongs to the Bcl-2 family. In terms of assembly, interacts with HIF3A (via C-terminus domain). Interacts with BOP.

The protein localises to the mitochondrion membrane. Functionally, promotes cell survival. Blocks dexamethasone-induced apoptosis. Mediates survival of postmitotic Sertoli cells by suppressing death-promoting activity of BAX. The sequence is that of Bcl-2-like protein 2 (BCL2L2) from Bos taurus (Bovine).